The sequence spans 100 residues: Large ribosomal subunit protein bL27 (100 aa).

A propeptide spanning residues Met-1 to Phe-13 is cleaved from the precursor. The segment covering Gly-18 to Asn-29 has biased composition (basic and acidic residues). Positions Gly-18–Asp-39 are disordered.

It belongs to the bacterial ribosomal protein bL27 family. In terms of processing, the N-terminus is cleaved by ribosomal processing cysteine protease Prp.

The polypeptide is Large ribosomal subunit protein bL27 (Ureaplasma urealyticum serovar 10 (strain ATCC 33699 / Western)).